A 266-amino-acid chain; its full sequence is Glucosamine-6-phosphate deaminase (266 aa).

Aspartate 72 serves as the catalytic Proton acceptor; for enolization step. Residue aspartate 141 is the For ring-opening step of the active site. The active-site Proton acceptor; for ring-opening step is the histidine 143. The For ring-opening step role is filled by glutamate 148.

It belongs to the glucosamine/galactosamine-6-phosphate isomerase family. NagB subfamily. Homohexamer.

It carries out the reaction alpha-D-glucosamine 6-phosphate + H2O = beta-D-fructose 6-phosphate + NH4(+). It participates in amino-sugar metabolism; N-acetylneuraminate degradation; D-fructose 6-phosphate from N-acetylneuraminate: step 5/5. With respect to regulation, allosterically activated by N-acetylglucosamine 6-phosphate (GlcNAc6P). Catalyzes the reversible isomerization-deamination of glucosamine 6-phosphate (GlcN6P) to form fructose 6-phosphate (Fru6P) and ammonium ion. This chain is Glucosamine-6-phosphate deaminase, found in Vibrio campbellii (strain ATCC BAA-1116).